The chain runs to 353 residues: Photosystem II D2 protein (353 aa).

Residue threonine 2 is modified to N-acetylthreonine. Phosphothreonine is present on threonine 2. The chain crosses the membrane as a helical span at residues 41–61 (CAYFALGGWFTGTTFVTSWYT). Histidine 118 is a binding site for chlorophyll a. The chain crosses the membrane as a helical span at residues 125–141 (GFMLRQFELARSVQLRP). Pheophytin a-binding residues include glutamine 130 and asparagine 143. Residues 153–166 (VFVSVFLIYPLGQS) form a helical membrane-spanning segment. Histidine 198 provides a ligand contact to chlorophyll a. The helical transmembrane segment at 208 to 228 (AALLCAIHGATVENTLFEDGD) threads the bilayer. 2 residues coordinate a plastoquinone: histidine 215 and phenylalanine 262. Histidine 215 provides a ligand contact to Fe cation. Histidine 269 is a binding site for Fe cation. Residues 279–295 (GLWMSALGVVGLALNLR) traverse the membrane as a helical segment.

This sequence belongs to the reaction center PufL/M/PsbA/D family. In terms of assembly, PSII is composed of 1 copy each of membrane proteins PsbA, PsbB, PsbC, PsbD, PsbE, PsbF, PsbH, PsbI, PsbJ, PsbK, PsbL, PsbM, PsbT, PsbX, PsbY, PsbZ, Psb30/Ycf12, at least 3 peripheral proteins of the oxygen-evolving complex and a large number of cofactors. It forms dimeric complexes. The D1/D2 heterodimer binds P680, chlorophylls that are the primary electron donor of PSII, and subsequent electron acceptors. It shares a non-heme iron and each subunit binds pheophytin, quinone, additional chlorophylls, carotenoids and lipids. There is also a Cl(-1) ion associated with D1 and D2, which is required for oxygen evolution. The PSII complex binds additional chlorophylls, carotenoids and specific lipids. is required as a cofactor.

It localises to the plastid. The protein resides in the chloroplast thylakoid membrane. The enzyme catalyses 2 a plastoquinone + 4 hnu + 2 H2O = 2 a plastoquinol + O2. Photosystem II (PSII) is a light-driven water:plastoquinone oxidoreductase that uses light energy to abstract electrons from H(2)O, generating O(2) and a proton gradient subsequently used for ATP formation. It consists of a core antenna complex that captures photons, and an electron transfer chain that converts photonic excitation into a charge separation. The D1/D2 (PsbA/PsbD) reaction center heterodimer binds P680, the primary electron donor of PSII as well as several subsequent electron acceptors. D2 is needed for assembly of a stable PSII complex. The polypeptide is Photosystem II D2 protein (Nymphaea alba (White water-lily)).